Here is a 237-residue protein sequence, read N- to C-terminus: Ribonuclease PH (237 aa).

Phosphate is bound by residues arginine 86 and 124–126 (GTR).

This sequence belongs to the RNase PH family. In terms of assembly, homohexameric ring arranged as a trimer of dimers.

It catalyses the reaction tRNA(n+1) + phosphate = tRNA(n) + a ribonucleoside 5'-diphosphate. In terms of biological role, phosphorolytic 3'-5' exoribonuclease that plays an important role in tRNA 3'-end maturation. Removes nucleotide residues following the 3'-CCA terminus of tRNAs; can also add nucleotides to the ends of RNA molecules by using nucleoside diphosphates as substrates, but this may not be physiologically important. Probably plays a role in initiation of 16S rRNA degradation (leading to ribosome degradation) during starvation. The protein is Ribonuclease PH of Shewanella woodyi (strain ATCC 51908 / MS32).